We begin with the raw amino-acid sequence, 53 residues long: Sec-independent protein translocase protein TatA (53 aa).

Residues Met-1 to Ala-21 form a helical membrane-spanning segment.

Belongs to the TatA/E family. As to quaternary structure, the Tat system comprises two distinct complexes: a TatABC complex, containing multiple copies of TatA, TatB and TatC subunits, and a separate TatA complex, containing only TatA subunits. Substrates initially bind to the TatABC complex, which probably triggers association of the separate TatA complex to form the active translocon.

The protein localises to the cell inner membrane. Functionally, part of the twin-arginine translocation (Tat) system that transports large folded proteins containing a characteristic twin-arginine motif in their signal peptide across membranes. TatA could form the protein-conducting channel of the Tat system. This is Sec-independent protein translocase protein TatA from Rickettsia rickettsii (strain Iowa).